The primary structure comprises 397 residues: Lysophospholipid transporter LplT (397 aa).

Over 1–17 (MSESVHTNTSLWSKGMK) the chain is Periplasmic. The chain crosses the membrane as a helical span at residues 18–38 (AVIVAQFLSAFGDNALLFATL). The Cytoplasmic portion of the chain corresponds to 39–52 (ALLKAQFYPEWSQP). Residues 53-73 (ILQMVFVGAYILFAPFVGQVA) traverse the membrane as a helical segment. Topologically, residues 74-90 (DSFAKGRVMMFANGLKL) are periplasmic. A helical transmembrane segment spans residues 91 to 111 (LGAASICFGINPFLGYTLVGV). At 112 to 144 (GAAAYSPAKYGILGELTTGSKLVKANGLMEAST) the chain is on the cytoplasmic side. The chain crosses the membrane as a helical span at residues 145 to 165 (IAAILLGSVAGGVLADWHVLV). Residue Ala166 is a topological domain, periplasmic. A helical transmembrane segment spans residues 167–187 (LAACALAYGGAVVANIYIPKL). At 188 to 226 (AAARPGQSWNLINMTRSFLNACTSLWRNGETRFSLVGTS) the chain is on the cytoplasmic side. Residues 227 to 247 (LFWGAGVTLRFLLVLWVPVAL) traverse the membrane as a helical segment. The Periplasmic segment spans residues 248 to 256 (GITDNATPT). Residues 257 to 277 (YLNAMVAIGIVVGAGAAAKLV) traverse the membrane as a helical segment. Residues 278–280 (TLE) are Cytoplasmic-facing. Residues 281 to 301 (TVSRCMPAGILIGVVVLIFSL) traverse the membrane as a helical segment. Over 302–304 (QHE) the chain is Periplasmic. A helical transmembrane segment spans residues 305-325 (LLPAYALLMLIGVLGGFFVVP). Topologically, residues 326-343 (LNALLQERGKKSVGAGNA) are cytoplasmic. A helical membrane pass occupies residues 344-364 (IAVQNLGENSAMLLMLGIYSL). Residues 365 to 366 (AV) lie on the Periplasmic side of the membrane. A helical transmembrane segment spans residues 367 to 387 (MVGIPVVPIGIGFGTLFALAI). The Cytoplasmic portion of the chain corresponds to 388–397 (TALWIWQRRH).

This sequence belongs to the major facilitator superfamily. LplT (TC 2.A.1.42) family.

It is found in the cell inner membrane. Functionally, catalyzes the facilitated diffusion of 2-acyl-glycero-3-phosphoethanolamine (2-acyl-GPE) into the cell. In Escherichia coli O9:H4 (strain HS), this protein is Lysophospholipid transporter LplT.